We begin with the raw amino-acid sequence, 411 residues long: UDP-N-acetylmuramoylalanine--D-glutamate ligase (411 aa).

An ATP-binding site is contributed by 92 to 98 (GTDGKST).

Belongs to the MurCDEF family.

It localises to the cytoplasm. It carries out the reaction UDP-N-acetyl-alpha-D-muramoyl-L-alanine + D-glutamate + ATP = UDP-N-acetyl-alpha-D-muramoyl-L-alanyl-D-glutamate + ADP + phosphate + H(+). It participates in cell wall biogenesis; peptidoglycan biosynthesis. In terms of biological role, cell wall formation. Catalyzes the addition of glutamate to the nucleotide precursor UDP-N-acetylmuramoyl-L-alanine (UMA). This is UDP-N-acetylmuramoylalanine--D-glutamate ligase from Hydrogenobaculum sp. (strain Y04AAS1).